The sequence spans 123 residues: MRQESLVTKYDYDFENDSIFFYGSNKKYRSSIDLDGIILDIGEDDQIMAIEILDASNRFNLAKEDLRNIKYFEARIEVSEENIRLTMKMSVNKRNKLVDKGLDALGLNSINLPISTQGIELNC.

May play a role in purine salvage. This Methanosarcina mazei (strain ATCC BAA-159 / DSM 3647 / Goe1 / Go1 / JCM 11833 / OCM 88) (Methanosarcina frisia) protein is Putative hypoxanthine phosphoribosyltransferase.